The sequence spans 251 residues: Ubiquinone/menaquinone biosynthesis C-methyltransferase UbiE (251 aa).

S-adenosyl-L-methionine-binding positions include T74, D95, and N123–A124.

It belongs to the class I-like SAM-binding methyltransferase superfamily. MenG/UbiE family.

The enzyme catalyses a 2-demethylmenaquinol + S-adenosyl-L-methionine = a menaquinol + S-adenosyl-L-homocysteine + H(+). The catalysed reaction is a 2-methoxy-6-(all-trans-polyprenyl)benzene-1,4-diol + S-adenosyl-L-methionine = a 5-methoxy-2-methyl-3-(all-trans-polyprenyl)benzene-1,4-diol + S-adenosyl-L-homocysteine + H(+). It functions in the pathway quinol/quinone metabolism; menaquinone biosynthesis; menaquinol from 1,4-dihydroxy-2-naphthoate: step 2/2. It participates in cofactor biosynthesis; ubiquinone biosynthesis. Functionally, methyltransferase required for the conversion of demethylmenaquinol (DMKH2) to menaquinol (MKH2) and the conversion of 2-polyprenyl-6-methoxy-1,4-benzoquinol (DDMQH2) to 2-polyprenyl-3-methyl-6-methoxy-1,4-benzoquinol (DMQH2). This is Ubiquinone/menaquinone biosynthesis C-methyltransferase UbiE from Shewanella woodyi (strain ATCC 51908 / MS32).